The following is a 242-amino-acid chain: Probable transcriptional regulatory protein Bxeno_A1185 (242 aa).

This sequence belongs to the TACO1 family.

It localises to the cytoplasm. This Paraburkholderia xenovorans (strain LB400) protein is Probable transcriptional regulatory protein Bxeno_A1185.